Consider the following 892-residue polypeptide: Ataxin-7 (892 aa).

Over residues 1–15 (MSERAADDVRGEPRR) the composition is skewed to basic and acidic residues. Disordered regions lie at residues 1–74 (MSER…SAAA) and 195–247 (SKGG…SRVP). Residues 16–38 (AAAAAGGAAAAAARQQQQQQQQQ) show a composition bias toward low complexity. Positions 39–55 (QPPPPQPQRQQHPPPPP) are enriched in pro residues. Positions 195–222 (SKGGSASGSNRSSSGGVLSASSSSSKLL) are enriched in low complexity. K257 is covalently cross-linked (Glycyl lysine isopeptide (Lys-Gly) (interchain with G-Cter in SUMO); alternate). A Glycyl lysine isopeptide (Lys-Gly) (interchain with G-Cter in SUMO2); alternate cross-link involves residue K257. Disordered stretches follow at residues 298 to 328 (PTLPSPGQILNGKGLPAPPTLEKKPEDNSNN), 389 to 505 (HKNK…ESVE), 616 to 730 (KSVP…SSHS), and 818 to 892 (SHGS…KARP). 2 stretches are compositionally biased toward basic and acidic residues: residues 318 to 327 (LEKKPEDNSN) and 389 to 403 (HKNKTREKELIRHPD). The SCA7 domain maps to 334–401 (KRLSEREFDP…KTREKELIRH (68 aa)). 3 stretches are compositionally biased toward pro residues: residues 405 to 419 (QQPPQPLRDPHPAPP), 448 to 458 (HTPSLPRPPGC), and 468 to 483 (IDPPPVHESPHPPLPA). A compositionally biased stretch (acidic residues) spans 493–502 (EEGEGDDKEE). Residues 616 to 629 (KSVPAHGTTLNAQP) show a composition bias toward polar residues. The segment covering 640–669 (SMQSRQVSSSSSSPSTPSGLSSVPSSPMSR) has biased composition (low complexity). Over residues 670–680 (KPQKLKSSKSL) the composition is skewed to basic residues. A compositionally biased stretch (polar residues) spans 685-695 (SSGNSTNCQNA). Composition is skewed to low complexity over residues 716–730 (HSSSSSSSSSSSSHS) and 840–851 (SPSSSSINNSSS).

It belongs to the ataxin-7 family. Component of the SAGA transcription coactivator-HAT complex, at least composed of SUPT3H, GCN5L2, TAF5L, TAF6L, SUPT7L, TADA3L, TAD1L, TAF10, TAF12, TRRAP, TAF9 and ATXN7. The STAGA core complex is associated with a subcomplex required for histone deubiquitination composed of ATXN7L3, ENY2 and USP22. Interacts with SORBS1, PSMC1 and CRX. Interacts with TRRAP, GCN5L2 and TAF10. Interacts with alpha tubulin. Proteolytically cleaved by caspase-7 (CASP7). The cleavage may be involved in SCA7 degeneration: the isoform fragments may exert distinct toxic influences that could contribute to selective neurodegeneration. In terms of processing, sumoylation decreases the aggregation propensity and cellular toxicity of forms with an expanded poly-Gln region but has no effect on subcellular location or interaction with components of the STAGA complex. Isoform a is expressed in CNS, but is expressed predominantly in the peripherical tissues. As to expression, isoform b is expressed in CNS. Also highly expressed in the frontal lobe, skeletal muscle and spinal cord and is expressed at a lower level in the lung, lymphoblast and intestine.

It is found in the nucleus. The protein localises to the nucleolus. It localises to the nucleus matrix. The protein resides in the cytoplasm. Its subcellular location is the cytoskeleton. Acts as a component of the SAGA (aka STAGA) transcription coactivator-HAT complex. Mediates the interaction of SAGA complex with the CRX and is involved in CRX-dependent gene activation. Probably involved in tethering the deubiquitination module within the SAGA complex. Necessary for microtubule cytoskeleton stabilization. Involved in neurodegeneration. In Homo sapiens (Human), this protein is Ataxin-7 (ATXN7).